Here is a 262-residue protein sequence, read N- to C-terminus: MTEIREFWDDVARSVAFLSRIPVPDRHFRGHDGGLGRAVRAFPLAGILIALPAAVTAVLLGAIHASSLFTAFLIVAAQATVTGALHEDGLADTADGFGGGRDRESALEIMKDSRIGTYGAVALILSFGIRVSALAAFLPLLTPTGGGVALLATAALSRAAMVWHWSRLPPARRDGVAAAAGAPEAPATSVALGSGVILALVLFFLSGIPTVAVLLSFGAFVLAVLSFTRIASRKLGGHTGDTIGATQQLTEVAVLGALALAI.

The next 4 membrane-spanning stretches (helical) occupy residues 43–63 (PLAG…LGAI), 121–141 (VALI…LPLL), 145–165 (GGGV…VWHW), and 195–215 (GVIL…AVLL).

It belongs to the CobS family. Mg(2+) serves as cofactor.

The protein localises to the cell inner membrane. It carries out the reaction alpha-ribazole + adenosylcob(III)inamide-GDP = adenosylcob(III)alamin + GMP + H(+). The enzyme catalyses alpha-ribazole 5'-phosphate + adenosylcob(III)inamide-GDP = adenosylcob(III)alamin 5'-phosphate + GMP + H(+). It participates in cofactor biosynthesis; adenosylcobalamin biosynthesis; adenosylcobalamin from cob(II)yrinate a,c-diamide: step 7/7. Its function is as follows. Joins adenosylcobinamide-GDP and alpha-ribazole to generate adenosylcobalamin (Ado-cobalamin). Also synthesizes adenosylcobalamin 5'-phosphate from adenosylcobinamide-GDP and alpha-ribazole 5'-phosphate. This is Adenosylcobinamide-GDP ribazoletransferase from Sinorhizobium medicae (strain WSM419) (Ensifer medicae).